The chain runs to 153 residues: Ribosome maturation factor RimP (153 aa).

The protein belongs to the RimP family.

Its subcellular location is the cytoplasm. Its function is as follows. Required for maturation of 30S ribosomal subunits. The protein is Ribosome maturation factor RimP of Synechococcus elongatus (strain ATCC 33912 / PCC 7942 / FACHB-805) (Anacystis nidulans R2).